A 508-amino-acid polypeptide reads, in one-letter code: 2,3-bisphosphoglycerate-independent phosphoglycerate mutase (508 aa).

The Mn(2+) site is built by Asp11 and Ser61. Ser61 (phosphoserine intermediate) is an active-site residue. Substrate-binding positions include His122, 150–151 (RD), Arg182, Arg188, 257–260 (RPDR), and Lys332. Asp397, His401, Asp438, His439, and His456 together coordinate Mn(2+).

The protein belongs to the BPG-independent phosphoglycerate mutase family. As to quaternary structure, monomer. Requires Mn(2+) as cofactor.

The enzyme catalyses (2R)-2-phosphoglycerate = (2R)-3-phosphoglycerate. It participates in carbohydrate degradation; glycolysis; pyruvate from D-glyceraldehyde 3-phosphate: step 3/5. Catalyzes the interconversion of 2-phosphoglycerate and 3-phosphoglycerate. The chain is 2,3-bisphosphoglycerate-independent phosphoglycerate mutase from Mycoplasma pneumoniae (strain ATCC 29342 / M129 / Subtype 1) (Mycoplasmoides pneumoniae).